The following is a 77-amino-acid chain: Pi-stichotoxin-Hmg5a (77 aa).

A signal peptide spans 1–21 (MDYQRLLFLFAVAMVITTTVA). A propeptide spanning residues 22-34 (LPQDTALMDGQLQ) is cleaved from the precursor. 3 disulfide bridges follow: Cys-40-Cys-73, Cys-42-Cys-66, and Cys-56-Cys-74.

This sequence belongs to the sea anemone type 3 (BDS) potassium channel toxin family.

It is found in the secreted. The protein resides in the nematocyst. Functionally, toxin that inhibits rat ASIC3 channels (IC(50)=13.8 uM). Also able to bind T.californica muscle-type nicotinic acetylcholine receptors (nAChR), and human alpha-7/CHRNA7 nicotinic acetylcholine receptors. The protein is Pi-stichotoxin-Hmg5a of Heteractis magnifica (Magnificent sea anemone).